The chain runs to 1375 residues: Protein lingerer (1375 aa).

Residues 1–69 are disordered; sequence MSTQTRSGGG…KAQPKATTEQ (69 aa). The span at 53-62 shows a compositional bias: basic and acidic residues; the sequence is SKTDKPEKAQ. In terms of domain architecture, UBA spans 84 to 124; it reads QINEKVLLLLTMTQRSEEEVCCALNECDYDLEAAANFLIEE. 2 stretches are compositionally biased toward low complexity: residues 142–161 and 173–184; these read ANNT…GNGN and SNRGGTRGSSDS. The segment at 142–286 is disordered; that stretch reads ANNTADGAAG…GSGRGGNANE (145 aa). The span at 185–204 shows a compositional bias: basic and acidic residues; it reads RGWRGRETRENERNQRESRE. A compositionally biased stretch (gly residues) spans 228–282; sequence RNGGGRSGPGGGGRGGGFVSRSGRGGGRMGGRTGGPRGDRGSGGPGGAYGSGRGG. Tyr321 carries the post-translational modification Phosphotyrosine. Position 324 is a phosphoserine (Ser324). Polar residues-rich tracts occupy residues 374 to 387 and 395 to 412; these read VQQG…SSSG and ATLS…SAAV. Disordered regions lie at residues 374-453 and 613-646; these read VQQG…ASPD and FEPL…QQQQ. Residues 426-441 are compositionally biased toward gly residues; the sequence is SGAGTGASAAAGGGAG. Composition is skewed to low complexity over residues 442 to 453 and 629 to 646; these read STPSSFVSASPD and QQQQ…QQQQ. At Ser672 the chain carries Phosphoserine. Thr673 bears the Phosphothreonine mark. Ser674 carries the phosphoserine modification. Residues 750 to 767 are compositionally biased toward low complexity; it reads QGYGSYQPSSYQQQAGSG. Disordered stretches follow at residues 750–801, 869–894, 987–1036, 1203–1234, and 1251–1277; these read QGYG…SGNA, SVST…GQTG, KNTS…GGSG, SKGG…DLTS, and EKQS…TSAQ. Positions 768–781 are enriched in gly residues; sequence AQSGTGAVSGGGGT. Low complexity-rich tracts occupy residues 789–801, 869–882, and 987–1008; these read GGSS…SGNA, SVST…NSGS, and KNTS…TGNA. Positions 1009–1036 are enriched in gly residues; it reads SGQGAGASTGGVGSSSGAGGAGSGGGSG. Over residues 1265–1277 the composition is skewed to polar residues; that stretch reads MPNTQTAGGTSAQ.

In terms of tissue distribution, at stage 11, expression is restricted to the neuroblasts, predominant in the central nervous system (CNS), including the brain and ventral nerve cord, and in the PNS. Later embryonic expression is seen in the gonads. Late third instar larvae show expression in the CNS, imaginal disks (including genital, eye-antennal, leg, wing and haltere disks), and gonads. In the larval brain, it is expressed in all of the glial cells and in clusters of neurons that projected contralaterally. In the larval ventral ganglion, it is expressed in subperineurial glia, peripheral exit glia, and a number of interneurons, but not in motor neurons. Isoform B is abundantly expressed in males and females. Isoform D is male specific and expressed at low levels.

It is found in the cytoplasm. Its function is as follows. Acts in the nervous system to mediate the control of copulatory organs during courtship. This Drosophila melanogaster (Fruit fly) protein is Protein lingerer.